The chain runs to 973 residues: UvrABC system protein A (973 aa).

Position 34–41 (Gly34–Ser41) interacts with ATP. 2 ABC transporter domains span residues Trp331–Leu609 and Pro629–Lys958. An ATP-binding site is contributed by Gly662 to Ser669. The C4-type zinc-finger motif lies at Cys761–Cys787.

It belongs to the ABC transporter superfamily. UvrA family. In terms of assembly, forms a heterotetramer with UvrB during the search for lesions.

Its subcellular location is the cytoplasm. Functionally, the UvrABC repair system catalyzes the recognition and processing of DNA lesions. UvrA is an ATPase and a DNA-binding protein. A damage recognition complex composed of 2 UvrA and 2 UvrB subunits scans DNA for abnormalities. When the presence of a lesion has been verified by UvrB, the UvrA molecules dissociate. The chain is UvrABC system protein A from Agrobacterium fabrum (strain C58 / ATCC 33970) (Agrobacterium tumefaciens (strain C58)).